The sequence spans 236 residues: NADH-quinone oxidoreductase subunit C (236 aa).

The disordered stretch occupies residues 1–20 (MSPPNQDAQEGRPDSPTAEV).

The protein belongs to the complex I 30 kDa subunit family. NDH-1 is composed of 14 different subunits. Subunits NuoB, C, D, E, F, and G constitute the peripheral sector of the complex.

The protein resides in the cell membrane. The catalysed reaction is a quinone + NADH + 5 H(+)(in) = a quinol + NAD(+) + 4 H(+)(out). Functionally, NDH-1 shuttles electrons from NADH, via FMN and iron-sulfur (Fe-S) centers, to quinones in the respiratory chain. The immediate electron acceptor for the enzyme in this species is believed to be a menaquinone. Couples the redox reaction to proton translocation (for every two electrons transferred, four hydrogen ions are translocated across the cytoplasmic membrane), and thus conserves the redox energy in a proton gradient. The chain is NADH-quinone oxidoreductase subunit C from Mycobacterium tuberculosis (strain ATCC 25177 / H37Ra).